Reading from the N-terminus, the 155-residue chain is Deoxyuridine 5'-triphosphate nucleotidohydrolase (155 aa).

Substrate-binding positions include 74–76, asparagine 87, and 91–93; these read RSG and LID.

This sequence belongs to the dUTPase family. The cofactor is Mg(2+).

The enzyme catalyses dUTP + H2O = dUMP + diphosphate + H(+). Its pathway is pyrimidine metabolism; dUMP biosynthesis; dUMP from dCTP (dUTP route): step 2/2. In terms of biological role, this enzyme is involved in nucleotide metabolism: it produces dUMP, the immediate precursor of thymidine nucleotides and it decreases the intracellular concentration of dUTP so that uracil cannot be incorporated into DNA. This is Deoxyuridine 5'-triphosphate nucleotidohydrolase from Xanthomonas oryzae pv. oryzae (strain MAFF 311018).